The sequence spans 179 residues: Large ribosomal subunit protein uL6 (179 aa).

The protein belongs to the universal ribosomal protein uL6 family. As to quaternary structure, part of the 50S ribosomal subunit.

In terms of biological role, this protein binds to the 23S rRNA, and is important in its secondary structure. It is located near the subunit interface in the base of the L7/L12 stalk, and near the tRNA binding site of the peptidyltransferase center. This is Large ribosomal subunit protein uL6 from Bifidobacterium longum subsp. infantis (strain ATCC 15697 / DSM 20088 / JCM 1222 / NCTC 11817 / S12).